Here is a 464-residue protein sequence, read N- to C-terminus: Protein FAM90A11 (464 aa).

3 disordered regions span residues 1–42 (MMAR…DPRL), 70–389 (PATL…HDGA), and 415–437 (HSPE…SEAP). Basic and acidic residues-rich tracts occupy residues 74-89 (GKKE…KPRV) and 97-114 (NKDK…DPQR). Low complexity predominate over residues 180-197 (LASLSPLRKASLSSSSSL). Over residues 341 to 356 (GPSTSPQMGRRTSAQV) the composition is skewed to polar residues.

It belongs to the FAM90 family.

This is Protein FAM90A11 from Homo sapiens (Human).